The following is a 195-amino-acid chain: MKELEEKIRQFGTVLPGNVLKVDAFLNHQVDPVLMQHIGQEFAARFKDAKITKVWTVESSGIAPAVMTGLALGVPVIFARKHKSLTLNSGMYTADVYSYTKKTTNRISISKRYVDKTDRVLLIDDFLANGQAVEGMLQIADQAGVEVVGAGIVIEKCFQPGSAELAAKGVRVESLAKVSSLADGQVSFKQTEGED.

Residues L20 and N27 each coordinate xanthine. Residue 128–132 coordinates 5-phospho-alpha-D-ribose 1-diphosphate; sequence ANGQA. Position 156 (K156) interacts with xanthine.

Belongs to the purine/pyrimidine phosphoribosyltransferase family. Xpt subfamily. Homodimer.

It is found in the cytoplasm. It carries out the reaction XMP + diphosphate = xanthine + 5-phospho-alpha-D-ribose 1-diphosphate. The protein operates within purine metabolism; XMP biosynthesis via salvage pathway; XMP from xanthine: step 1/1. Its function is as follows. Converts the preformed base xanthine, a product of nucleic acid breakdown, to xanthosine 5'-monophosphate (XMP), so it can be reused for RNA or DNA synthesis. The chain is Xanthine phosphoribosyltransferase from Limosilactobacillus fermentum (strain NBRC 3956 / LMG 18251) (Lactobacillus fermentum).